Reading from the N-terminus, the 190-residue chain is Potassium-transporting ATPase KdpC subunit (190 aa).

Residues Thr-10–Gly-30 traverse the membrane as a helical segment.

It belongs to the KdpC family. The system is composed of three essential subunits: KdpA, KdpB and KdpC.

It localises to the cell inner membrane. Its function is as follows. Part of the high-affinity ATP-driven potassium transport (or Kdp) system, which catalyzes the hydrolysis of ATP coupled with the electrogenic transport of potassium into the cytoplasm. This subunit acts as a catalytic chaperone that increases the ATP-binding affinity of the ATP-hydrolyzing subunit KdpB by the formation of a transient KdpB/KdpC/ATP ternary complex. The protein is Potassium-transporting ATPase KdpC subunit of Escherichia coli (strain SE11).